The sequence spans 302 residues: Methionyl-tRNA formyltransferase (302 aa).

106–109 (SVLP) is a (6S)-5,6,7,8-tetrahydrofolate binding site.

This sequence belongs to the Fmt family.

It carries out the reaction L-methionyl-tRNA(fMet) + (6R)-10-formyltetrahydrofolate = N-formyl-L-methionyl-tRNA(fMet) + (6S)-5,6,7,8-tetrahydrofolate + H(+). Its function is as follows. Attaches a formyl group to the free amino group of methionyl-tRNA(fMet). The formyl group appears to play a dual role in the initiator identity of N-formylmethionyl-tRNA by promoting its recognition by IF2 and preventing the misappropriation of this tRNA by the elongation apparatus. This Hydrogenobaculum sp. (strain Y04AAS1) protein is Methionyl-tRNA formyltransferase.